The following is a 214-amino-acid chain: Holliday junction branch migration complex subunit RuvA (214 aa).

Positions 1–68 are domain I; sequence MIGFLQGKVL…QPKPVLIGFD (68 aa). The domain II stretch occupies residues 69–146; the sequence is SAEEKDFFQL…RFLLAADEAG (78 aa). Residues 147–160 are flexible linker; sequence AGDGVSKTGTPSLP. The tract at residues 161–214 is domain III; the sequence is IQKAIDQVVDVLVQQLGHTPSAAKMMVAQALDRDPEIMTPEALFDEVYKGDVDA.

It belongs to the RuvA family. In terms of assembly, homotetramer. Forms an RuvA(8)-RuvB(12)-Holliday junction (HJ) complex. HJ DNA is sandwiched between 2 RuvA tetramers; dsDNA enters through RuvA and exits via RuvB. An RuvB hexamer assembles on each DNA strand where it exits the tetramer. Each RuvB hexamer is contacted by two RuvA subunits (via domain III) on 2 adjacent RuvB subunits; this complex drives branch migration. In the full resolvosome a probable DNA-RuvA(4)-RuvB(12)-RuvC(2) complex forms which resolves the HJ.

It localises to the cytoplasm. The RuvA-RuvB-RuvC complex processes Holliday junction (HJ) DNA during genetic recombination and DNA repair, while the RuvA-RuvB complex plays an important role in the rescue of blocked DNA replication forks via replication fork reversal (RFR). RuvA specifically binds to HJ cruciform DNA, conferring on it an open structure. The RuvB hexamer acts as an ATP-dependent pump, pulling dsDNA into and through the RuvAB complex. HJ branch migration allows RuvC to scan DNA until it finds its consensus sequence, where it cleaves and resolves the cruciform DNA. The chain is Holliday junction branch migration complex subunit RuvA from Desulforapulum autotrophicum (strain ATCC 43914 / DSM 3382 / VKM B-1955 / HRM2) (Desulfobacterium autotrophicum).